A 700-amino-acid polypeptide reads, in one-letter code: Choline transporter-like protein 5-B (700 aa).

Topologically, residues 1–4 are cytoplasmic; it reads GCTD. A helical transmembrane segment spans residues 5–25; it reads VLCCVIFVIVILGYIVLGTVA. Over 26–209 the chain is Extracellular; that stretch reads WMHGDPRKVV…KIFEDYASSW (184 aa). Asn-157 and Asn-164 each carry an N-linked (GlcNAc...) asparagine glycan. The chain crosses the membrane as a helical span at residues 210-230; sequence FWILIGLVISMLVSLVFILLL. Over 231–233 the chain is Cytoplasmic; it reads RFT. Residues 234-254 form a helical membrane-spanning segment; that stretch reads AGVLFWLVIFGVIAAVGYGIW. The Extracellular portion of the chain corresponds to 255–292; sequence HCYWEYSSLKGKPDSDVTISDIGFQTDFRVYLQLSQTW. Residues 293–313 traverse the membrane as a helical segment; the sequence is LIFMTSLAVIEAIIILVLIFL. At 314–341 the chain is on the cytoplasmic side; sequence RNRVRIAIALLKEGSKAIGCIMSTLFYP. The chain crosses the membrane as a helical span at residues 342-362; sequence IITFLLLALCIAYWAVTAVFL. Residues 363–432 lie on the Extracellular side of the membrane; that stretch reads ASSGEAVYKV…LQLCNLLVFL (70 aa). Asn-383 and Asn-395 each carry an N-linked (GlcNAc...) asparagine glycan. Residues 433-455 traverse the membrane as a helical segment; sequence WLVNFTIALGQCTLAGAFAAYYW. At 456-482 the chain is on the cytoplasmic side; the sequence is ALRKPADIPPCPLASSFGRALRYHTGS. A helical transmembrane segment spans residues 483 to 503; that stretch reads LAFGALILSIVQFIRIILEYL. Over 504-541 the chain is Extracellular; sequence DHKLKGAHNAFTRFLLCCLKCCFWCLEHFIKFMNRNAY. A helical membrane pass occupies residues 542 to 562; sequence IMISIYGKNFCTSARDAFFLL. The Cytoplasmic segment spans residues 563-577; that stretch reads MRNVMRVAVLDKVTD. The helical transmembrane segment at 578–598 threads the bilayer; it reads FLLFLGKLLISGSVGVLAFFF. At 599 to 616 the chain is on the extracellular side; that stretch reads FTRQIPVIQEEVPSLNYY. The helical transmembrane segment at 617–637 threads the bilayer; that stretch reads WVPLLTVIFGSYMIAHGFFNV. At 638–687 the chain is on the cytoplasmic side; that stretch reads YAMCVDTLFLCFLLDLEKNDGSATRPYYMCSSLRAILNKKNQKRPKETKR. A disordered region spans residues 676 to 700; the sequence is KKNQKRPKETKRGRKQKKEQPKSRH. A compositionally biased stretch (basic residues) spans 677 to 692; the sequence is KNQKRPKETKRGRKQK.

The protein belongs to the CTL (choline transporter-like) family.

The protein localises to the cell membrane. It catalyses the reaction choline(out) + n H(+)(in) = choline(in) + n H(+)(out). Its function is as follows. Choline/H+ antiporter. This Danio rerio (Zebrafish) protein is Choline transporter-like protein 5-B (slc44a5b).